Here is a 330-residue protein sequence, read N- to C-terminus: Biotin synthase (330 aa).

Residues 42–268 (YYGRKVKLNM…INPSKEIRIA (227 aa)) form the Radical SAM core domain. Positions 60, 64, and 67 each coordinate [4Fe-4S] cluster. [2Fe-2S] cluster is bound by residues Cys103, Cys136, Cys196, and Arg266.

It belongs to the radical SAM superfamily. Biotin synthase family. In terms of assembly, homodimer. Requires [4Fe-4S] cluster as cofactor. It depends on [2Fe-2S] cluster as a cofactor.

It carries out the reaction (4R,5S)-dethiobiotin + (sulfur carrier)-SH + 2 reduced [2Fe-2S]-[ferredoxin] + 2 S-adenosyl-L-methionine = (sulfur carrier)-H + biotin + 2 5'-deoxyadenosine + 2 L-methionine + 2 oxidized [2Fe-2S]-[ferredoxin]. The protein operates within cofactor biosynthesis; biotin biosynthesis; biotin from 7,8-diaminononanoate: step 2/2. In terms of biological role, catalyzes the conversion of dethiobiotin (DTB) to biotin by the insertion of a sulfur atom into dethiobiotin via a radical-based mechanism. The chain is Biotin synthase from Macrococcus caseolyticus (strain JCSC5402) (Macrococcoides caseolyticum).